We begin with the raw amino-acid sequence, 226 residues long: ATP-dependent dethiobiotin synthetase BioD (226 aa).

Residue Gly12 to Val17 coordinates ATP. Thr16 contacts Mg(2+). Lys37 is an active-site residue. Residue Thr41 participates in substrate binding. ATP contacts are provided by residues Asp49, Glu108–Gly111, Gly169–Ser170, and Pro197–Gly199. Asp49 and Glu108 together coordinate Mg(2+).

Belongs to the dethiobiotin synthetase family. Homodimer. The cofactor is Mg(2+).

It localises to the cytoplasm. The enzyme catalyses (7R,8S)-7,8-diammoniononanoate + CO2 + ATP = (4R,5S)-dethiobiotin + ADP + phosphate + 3 H(+). The protein operates within cofactor biosynthesis; biotin biosynthesis; biotin from 7,8-diaminononanoate: step 1/2. In terms of biological role, catalyzes a mechanistically unusual reaction, the ATP-dependent insertion of CO2 between the N7 and N8 nitrogen atoms of 7,8-diaminopelargonic acid (DAPA, also called 7,8-diammoniononanoate) to form a ureido ring. The chain is ATP-dependent dethiobiotin synthetase BioD from Mycolicibacterium gilvum (strain PYR-GCK) (Mycobacterium gilvum (strain PYR-GCK)).